Consider the following 311-residue polypeptide: Ciliary microtubule inner protein 2B (311 aa).

Disordered regions lie at residues 64 to 93 and 150 to 183; these read PFPP…LGDP and QEGR…APFM.

Belongs to the CIMIP2 family. As to expression, expressed in airway epithelial cells.

Its subcellular location is the cytoplasm. The protein localises to the cytoskeleton. It localises to the cilium axoneme. In terms of biological role, microtubule inner protein (MIP) part of the dynein-decorated doublet microtubules (DMTs) in cilia axoneme, which is required for motile cilia beating. This Xenopus laevis (African clawed frog) protein is Ciliary microtubule inner protein 2B (cimip2b).